A 658-amino-acid chain; its full sequence is Probable rhamnogalacturonate lyase B (658 aa).

Residues 1-19 form the signal peptide; sequence MRFAIPLGAACAWAGVALA. N-linked (GlcNAc...) asparagine glycans are attached at residues N110, N143, N239, N280, N522, N530, N592, and N633.

The protein belongs to the polysaccharide lyase 4 family.

It is found in the secreted. The catalysed reaction is Endotype eliminative cleavage of L-alpha-rhamnopyranosyl-(1-&gt;4)-alpha-D-galactopyranosyluronic acid bonds of rhamnogalacturonan I domains in ramified hairy regions of pectin leaving L-rhamnopyranose at the reducing end and 4-deoxy-4,5-unsaturated D-galactopyranosyluronic acid at the non-reducing end.. In terms of biological role, pectinolytic enzymes consist of four classes of enzymes: pectin lyase, polygalacturonase, pectin methylesterase and rhamnogalacturonase. Degrades the rhamnogalacturonan I (RG-I) backbone of pectin. This is Probable rhamnogalacturonate lyase B (rglB) from Aspergillus fumigatus (strain CBS 144.89 / FGSC A1163 / CEA10) (Neosartorya fumigata).